Reading from the N-terminus, the 429-residue chain is Zinc finger protein 385C (429 aa).

Residues 77–107 form a Matrin-type 1 zinc finger; that stretch reads ISCNICHLRFNSANQAEAHYKGHRHARKLKA. 3 disordered regions span residues 109–224, 258–295, and 311–340; these read EAAK…GRGE, GHQG…GPSP, and QLKQ…NKLQ. Low complexity predominate over residues 125–146; that stretch reads TVVSSASPPASGSPGTPQSKGP. Pro residues predominate over residues 147 to 162; that stretch reads ASPPLGPSLQLPPTPD. A compositionally biased stretch (low complexity) spans 181 to 193; it reads CDAAASSSSSSCP. The Matrin-type 2 zinc finger occupies 225 to 259; that stretch reads KGRLYCPTCKVTVNSASQLQAHNTGAKHRWMVEGH. The segment covering 262 to 284 has biased composition (basic residues); the sequence is APRRGRGRPVSRGGTGHKTKRVI. The Matrin-type 3 zinc-finger motif lies at 297 to 327; the sequence is FHCALCQLHVNSETQLKQHMSSRRHKDRLAG.

The protein localises to the nucleus. In Mus musculus (Mouse), this protein is Zinc finger protein 385C.